A 294-amino-acid polypeptide reads, in one-letter code: Small ribosomal subunit biogenesis GTPase RsgA (294 aa).

The 161-residue stretch at 63 to 223 (KNELLRPPIA…VADTPGFSSL (161 aa)) folds into the CP-type G domain. Residues 112 to 115 (SKID) and 166 to 174 (GQSGVGKSS) contribute to the GTP site. Residues cysteine 247, cysteine 252, histidine 254, and cysteine 260 each coordinate Zn(2+).

Belongs to the TRAFAC class YlqF/YawG GTPase family. RsgA subfamily. As to quaternary structure, monomer. Associates with 30S ribosomal subunit, binds 16S rRNA. Zn(2+) serves as cofactor.

The protein resides in the cytoplasm. Functionally, one of several proteins that assist in the late maturation steps of the functional core of the 30S ribosomal subunit. Helps release RbfA from mature subunits. May play a role in the assembly of ribosomal proteins into the subunit. Circularly permuted GTPase that catalyzes slow GTP hydrolysis, GTPase activity is stimulated by the 30S ribosomal subunit. In Halalkalibacterium halodurans (strain ATCC BAA-125 / DSM 18197 / FERM 7344 / JCM 9153 / C-125) (Bacillus halodurans), this protein is Small ribosomal subunit biogenesis GTPase RsgA.